Here is a 186-residue protein sequence, read N- to C-terminus: Elongation factor P (186 aa).

The protein belongs to the elongation factor P family.

The protein localises to the cytoplasm. Its pathway is protein biosynthesis; polypeptide chain elongation. In terms of biological role, involved in peptide bond synthesis. Stimulates efficient translation and peptide-bond synthesis on native or reconstituted 70S ribosomes in vitro. Probably functions indirectly by altering the affinity of the ribosome for aminoacyl-tRNA, thus increasing their reactivity as acceptors for peptidyl transferase. The polypeptide is Elongation factor P (Polynucleobacter necessarius subsp. necessarius (strain STIR1)).